We begin with the raw amino-acid sequence, 72 residues long: Translation initiation factor IF-1 (72 aa).

In terms of domain architecture, S1-like spans 1 to 72 (MAKDDVIEVE…TRGRITYRYK (72 aa)). Tyr-60 is subject to Phosphotyrosine.

This sequence belongs to the IF-1 family. As to quaternary structure, component of the 30S ribosomal translation pre-initiation complex which assembles on the 30S ribosome in the order IF-2 and IF-3, IF-1 and N-formylmethionyl-tRNA(fMet); mRNA recruitment can occur at any time during PIC assembly.

The protein localises to the cytoplasm. Functionally, one of the essential components for the initiation of protein synthesis. Stabilizes the binding of IF-2 and IF-3 on the 30S subunit to which N-formylmethionyl-tRNA(fMet) subsequently binds. Helps modulate mRNA selection, yielding the 30S pre-initiation complex (PIC). Upon addition of the 50S ribosomal subunit IF-1, IF-2 and IF-3 are released leaving the mature 70S translation initiation complex. The chain is Translation initiation factor IF-1 from Bacillus pumilus (strain SAFR-032).